The primary structure comprises 319 residues: Aspartate carbamoyltransferase catalytic subunit (319 aa).

2 residues coordinate carbamoyl phosphate: R59 and T60. Position 87 (K87) interacts with L-aspartate. Residues R109, H137, and Q140 each coordinate carbamoyl phosphate. L-aspartate contacts are provided by R170 and R224. Residues G265 and P266 each contribute to the carbamoyl phosphate site.

This sequence belongs to the aspartate/ornithine carbamoyltransferase superfamily. ATCase family. In terms of assembly, heterododecamer (2C3:3R2) of six catalytic PyrB chains organized as two trimers (C3), and six regulatory PyrI chains organized as three dimers (R2).

It carries out the reaction carbamoyl phosphate + L-aspartate = N-carbamoyl-L-aspartate + phosphate + H(+). Its pathway is pyrimidine metabolism; UMP biosynthesis via de novo pathway; (S)-dihydroorotate from bicarbonate: step 2/3. Its function is as follows. Catalyzes the condensation of carbamoyl phosphate and aspartate to form carbamoyl aspartate and inorganic phosphate, the committed step in the de novo pyrimidine nucleotide biosynthesis pathway. This Gemmatimonas aurantiaca (strain DSM 14586 / JCM 11422 / NBRC 100505 / T-27) protein is Aspartate carbamoyltransferase catalytic subunit.